A 431-amino-acid polypeptide reads, in one-letter code: Lipid storage droplets surface-binding protein 1 (431 aa).

Positions 397 to 431 are disordered; sequence KVTGSDGGNSNHRSSRRRQDPNHYSATHNNINGVY. Residues 418 to 431 show a composition bias toward polar residues; sequence NHYSATHNNINGVY.

It belongs to the perilipin family.

The protein resides in the cytoplasm. The protein localises to the lipid droplet. In terms of biological role, required for normal deposition of neutral lipids in the oocyte. The polypeptide is Lipid storage droplets surface-binding protein 1 (Drosophila melanogaster (Fruit fly)).